The chain runs to 285 residues: Nucleotide-binding protein Psyr_4150 (285 aa).

8 to 15 (GRSGSGKS) contacts ATP. 60–63 (DARN) contacts GTP.

It belongs to the RapZ-like family.

Its function is as follows. Displays ATPase and GTPase activities. This is Nucleotide-binding protein Psyr_4150 from Pseudomonas syringae pv. syringae (strain B728a).